A 570-amino-acid chain; its full sequence is Urease subunit alpha (570 aa).

Residues 131–570 (GGIDSHIHFI…LPMTQRYFLF (440 aa)) enclose the Urease domain. Ni(2+)-binding residues include H136, H138, and K219. K219 is subject to N6-carboxylysine. A substrate-binding site is contributed by H221. The Ni(2+) site is built by H248 and H274. The active-site Proton donor is H322. D362 contacts Ni(2+).

Belongs to the metallo-dependent hydrolases superfamily. Urease alpha subunit family. Heterotrimer of UreA (gamma), UreB (beta) and UreC (alpha) subunits. Three heterotrimers associate to form the active enzyme. Requires Ni cation as cofactor. Carboxylation allows a single lysine to coordinate two nickel ions.

It is found in the cytoplasm. The catalysed reaction is urea + 2 H2O + H(+) = hydrogencarbonate + 2 NH4(+). Its pathway is nitrogen metabolism; urea degradation; CO(2) and NH(3) from urea (urease route): step 1/1. The polypeptide is Urease subunit alpha (Trichodesmium erythraeum (strain IMS101)).